Consider the following 117-residue polypeptide: Large ribosomal subunit protein bL20c (117 aa).

This sequence belongs to the bacterial ribosomal protein bL20 family.

It is found in the plastid. Its subcellular location is the chloroplast. Its function is as follows. Binds directly to 23S ribosomal RNA and is necessary for the in vitro assembly process of the 50S ribosomal subunit. It is not involved in the protein synthesizing functions of that subunit. The chain is Large ribosomal subunit protein bL20c from Gossypium hirsutum (Upland cotton).